A 377-amino-acid chain; its full sequence is Nitric oxide reductase FlRd-NAD(+) reductase (377 aa).

This sequence belongs to the FAD-dependent oxidoreductase family. FAD is required as a cofactor.

It localises to the cytoplasm. It catalyses the reaction 2 reduced [nitric oxide reductase rubredoxin domain] + NAD(+) + H(+) = 2 oxidized [nitric oxide reductase rubredoxin domain] + NADH. It participates in nitrogen metabolism; nitric oxide reduction. Its function is as follows. One of at least two accessory proteins for anaerobic nitric oxide (NO) reductase. Reduces the rubredoxin moiety of NO reductase. The polypeptide is Nitric oxide reductase FlRd-NAD(+) reductase (Escherichia coli (strain K12 / MC4100 / BW2952)).